Here is a 102-residue protein sequence, read N- to C-terminus: Aspartyl/glutamyl-tRNA(Asn/Gln) amidotransferase subunit C (102 aa).

This sequence belongs to the GatC family. In terms of assembly, heterotrimer of A, B and C subunits.

It carries out the reaction L-glutamyl-tRNA(Gln) + L-glutamine + ATP + H2O = L-glutaminyl-tRNA(Gln) + L-glutamate + ADP + phosphate + H(+). It catalyses the reaction L-aspartyl-tRNA(Asn) + L-glutamine + ATP + H2O = L-asparaginyl-tRNA(Asn) + L-glutamate + ADP + phosphate + 2 H(+). Allows the formation of correctly charged Asn-tRNA(Asn) or Gln-tRNA(Gln) through the transamidation of misacylated Asp-tRNA(Asn) or Glu-tRNA(Gln) in organisms which lack either or both of asparaginyl-tRNA or glutaminyl-tRNA synthetases. The reaction takes place in the presence of glutamine and ATP through an activated phospho-Asp-tRNA(Asn) or phospho-Glu-tRNA(Gln). In Mycobacteroides abscessus (strain ATCC 19977 / DSM 44196 / CCUG 20993 / CIP 104536 / JCM 13569 / NCTC 13031 / TMC 1543 / L948) (Mycobacterium abscessus), this protein is Aspartyl/glutamyl-tRNA(Asn/Gln) amidotransferase subunit C.